Reading from the N-terminus, the 74-residue chain is Acyl carrier protein (74 aa).

Residues 1–73 (MAVFEKVQEI…DLVAYVEEKT (73 aa)) enclose the Carrier domain. Residue Ser35 is modified to O-(pantetheine 4'-phosphoryl)serine.

It belongs to the acyl carrier protein (ACP) family. 4'-phosphopantetheine is transferred from CoA to a specific serine of apo-ACP by AcpS. This modification is essential for activity because fatty acids are bound in thioester linkage to the sulfhydryl of the prosthetic group.

It is found in the cytoplasm. Its pathway is lipid metabolism; fatty acid biosynthesis. In terms of biological role, carrier of the growing fatty acid chain in fatty acid biosynthesis. In Streptococcus thermophilus (strain CNRZ 1066), this protein is Acyl carrier protein.